The following is a 261-amino-acid chain: MASNNDSIKKTLGVVIGLSLVCSIIVSTAAVGLRDKQKANAVLDKQSKIVEVAGIEANGKKVPELYAEYIEPRLVDFATGEFVEEAADGSKAANYDQRKAAKDNATSIKLTAEQDKAKIIRRANTGIVYLVKNGDDVSKVIIPVHGNGLWSMMYAFVAVETDGNTVSGITYYEQGETPGLGGEVENPSWRAQWVGKKLFDENHKPAIKVVKGGAPAGSEHGVDGLSGATLTGNGVQGTFDFWLGDMGFGPFLAKVRDGGLN.

A helical transmembrane segment spans residues 12-32; the sequence is LGVVIGLSLVCSIIVSTAAVG. The residue at position 229 (threonine 229) is an FMN phosphoryl threonine.

This sequence belongs to the NqrC family. In terms of assembly, composed of six subunits; NqrA, NqrB, NqrC, NqrD, NqrE and NqrF. FMN is required as a cofactor.

The protein localises to the cell inner membrane. It carries out the reaction a ubiquinone + n Na(+)(in) + NADH + H(+) = a ubiquinol + n Na(+)(out) + NAD(+). Its function is as follows. NQR complex catalyzes the reduction of ubiquinone-1 to ubiquinol by two successive reactions, coupled with the transport of Na(+) ions from the cytoplasm to the periplasm. NqrA to NqrE are probably involved in the second step, the conversion of ubisemiquinone to ubiquinol. This chain is Na(+)-translocating NADH-quinone reductase subunit C, found in Vibrio parahaemolyticus serotype O3:K6 (strain RIMD 2210633).